A 623-amino-acid polypeptide reads, in one-letter code: Heterogeneous nuclear ribonucleoprotein L (623 aa).

A compositionally biased stretch (basic residues) spans 1-16 (MSRRLLPRAEKRRRRL). A disordered region spans residues 1–97 (MSRRLLPRAE…NYDDPHKTPA (97 aa)). The segment covering 17-27 (EQRQQPDEQLR) has biased composition (basic and acidic residues). Positions 28 to 37 (RAGAMVKMAA) are enriched in low complexity. Gly residues predominate over residues 38 to 54 (AGGGGGGGRYYGGGNEG). Residues lysine 59 and lysine 62 each participate in a glycyl lysine isopeptide (Lys-Gly) (interchain with G-Cter in SUMO2) cross-link. The span at 69–87 (QHGGGGGGGSGAAGGGGGE) shows a compositional bias: gly residues. The residue at position 98 (serine 98) is a Phosphoserine. An RRM 1 domain is found at 99 to 173 (PVVHIRGLID…HPAFVNYSTS (75 aa)). Residue lysine 133 forms a Glycyl lysine isopeptide (Lys-Gly) (interchain with G-Cter in SUMO2) linkage. Serine 182 is modified (phosphoserine). The RRM 2 domain maps to 190-267 (SVLLFTILNP…CTLKIEYAKP (78 aa)). An N6-acetyllysine modification is found at lysine 266. Positions 281-298 (DYTNPNLSGQGDPGSNPN) are enriched in polar residues. The interval 281–413 (DYTNPNLSGQ…PPPPDYGPHA (133 aa)) is disordered. Serine 288 and serine 295 each carry phosphoserine. A Glycyl lysine isopeptide (Lys-Gly) (interchain with G-Cter in SUMO2) cross-link involves residue lysine 299. Arginine 388 and arginine 392 each carry asymmetric dimethylarginine. Residues 398–409 (GHPPPPPPPPDY) show a composition bias toward pro residues. A Phosphoserine modification is found at serine 415. RRM domains follow at residues 416-490 (PVLM…VSKQ) and 498-586 (SYGL…WDSK). Residue serine 578 is modified to Phosphoserine; by CaMK4. A Glycyl lysine isopeptide (Lys-Gly) (interchain with G-Cter in SUMO2) cross-link involves residue lysine 602.

Identified in a IGF2BP1-dependent mRNP granule complex containing untranslated mRNAs. Interacts with HNRNPLL. Interacts with APEX1; the interaction is DNA-dependent. Component of a complex with SETD2. Interacts with ELAVL1. Part of a transcription inhibitory ribonucleoprotein complex composed at least of the circular RNA circZNF827, ZNF827 and HNRNPK. Interacts with CHD8 in an RNA-dependent manner. Post-translationally, several isoelectric forms of the L protein are probably the results of post-translational modifications. In terms of processing, phosphorylation at Ser-578 by CaMK4 enhances interaction with a CaMK4-responsive RNA element (CaRRE1), and prevents inclusion of the stress axis-regulated exon (STREX) of the KCNMA1 potassium channel transcripts upon membrane depolarization.

The protein localises to the nucleus. Its subcellular location is the nucleoplasm. The protein resides in the cytoplasm. In terms of biological role, splicing factor binding to exonic or intronic sites and acting as either an activator or repressor of exon inclusion. Exhibits a binding preference for CA-rich elements. Component of the heterogeneous nuclear ribonucleoprotein (hnRNP) complexes and associated with most nascent transcripts. Associates, together with APEX1, to the negative calcium responsive element (nCaRE) B2 of the APEX2 promoter. As part of a ribonucleoprotein complex composed at least of ZNF827, HNRNPK and the circular RNA circZNF827 that nucleates the complex on chromatin, may negatively regulate the transcription of genes involved in neuronal differentiation. Regulates alternative splicing of a core group of genes involved in neuronal differentiation, likely by mediating H3K36me3-coupled transcription elongation and co-transcriptional RNA processing via interaction with CHD8. The chain is Heterogeneous nuclear ribonucleoprotein L from Rattus norvegicus (Rat).